The chain runs to 1563 residues: Pentafunctional AROM polypeptide (1563 aa).

The interval 1 to 382 (MAESSSNPTR…YEPKASVVED (382 aa)) is 3-dehydroquinate synthase. NAD(+)-binding positions include 48-50 (DTN), 82-85 (EYSK), 113-115 (GGV), and aspartate 118. Arginine 129 is a 7-phospho-2-dehydro-3-deoxy-D-arabino-heptonate binding site. 138–139 (TT) lines the NAD(+) pocket. 7-phospho-2-dehydro-3-deoxy-D-arabino-heptonate contacts are provided by aspartate 145 and lysine 151. Residue lysine 160 participates in NAD(+) binding. Position 161 (asparagine 161) interacts with 7-phospho-2-dehydro-3-deoxy-D-arabino-heptonate. Residues 178–181 (FLNT) and asparagine 189 contribute to the NAD(+) site. Residue glutamate 193 coordinates Zn(2+). 7-phospho-2-dehydro-3-deoxy-D-arabino-heptonate contacts are provided by residues 193-196 (EVIK) and lysine 248. Glutamate 258 acts as the Proton acceptor; for 3-dehydroquinate synthase activity in catalysis. Residues 262 to 266 (RNLLN) and histidine 269 contribute to the 7-phospho-2-dehydro-3-deoxy-D-arabino-heptonate site. Residue histidine 269 coordinates Zn(2+). The Proton acceptor; for 3-dehydroquinate synthase activity role is filled by histidine 273. The 7-phospho-2-dehydro-3-deoxy-D-arabino-heptonate site is built by histidine 285 and lysine 354. Histidine 285 serves as a coordination point for Zn(2+). The tract at residues 395–834 (VHAGVPKDLK…WDTMSNYFKS (440 aa)) is EPSP synthase. The For EPSP synthase activity role is filled by cysteine 816. Positions 836–850 (LEGEEEPHSSHVSHE) are enriched in basic and acidic residues. The disordered stretch occupies residues 836 to 857 (LEGEEEPHSSHVSHEKPRKGNP). The segment at 857–1051 (PKSIFIIGMR…KKKPQSSFVS (195 aa)) is shikimate kinase. 864–871 (GMRGAGKS) serves as a coordination point for ATP. Residues 1052–1265 (LTVPNVSKAL…AAPGQLSAAE (214 aa)) form a 3-dehydroquinase region. The active-site Proton acceptor; for 3-dehydroquinate dehydratase activity is the histidine 1168. Residue lysine 1196 is the Schiff-base intermediate with substrate; for 3-dehydroquinate dehydratase activity of the active site. Positions 1278-1563 (PRSFYLFGKP…TDAQAAVMGN (286 aa)) are shikimate dehydrogenase.

In the N-terminal section; belongs to the sugar phosphate cyclases superfamily. Dehydroquinate synthase family. It in the 2nd section; belongs to the EPSP synthase family. The protein in the 3rd section; belongs to the shikimate kinase family. This sequence in the 4th section; belongs to the type-I 3-dehydroquinase family. In the C-terminal section; belongs to the shikimate dehydrogenase family. As to quaternary structure, homodimer. Requires Zn(2+) as cofactor.

Its subcellular location is the cytoplasm. It catalyses the reaction 7-phospho-2-dehydro-3-deoxy-D-arabino-heptonate = 3-dehydroquinate + phosphate. The catalysed reaction is 3-dehydroquinate = 3-dehydroshikimate + H2O. The enzyme catalyses shikimate + NADP(+) = 3-dehydroshikimate + NADPH + H(+). It carries out the reaction shikimate + ATP = 3-phosphoshikimate + ADP + H(+). It catalyses the reaction 3-phosphoshikimate + phosphoenolpyruvate = 5-O-(1-carboxyvinyl)-3-phosphoshikimate + phosphate. It functions in the pathway metabolic intermediate biosynthesis; chorismate biosynthesis; chorismate from D-erythrose 4-phosphate and phosphoenolpyruvate: step 2/7. Its pathway is metabolic intermediate biosynthesis; chorismate biosynthesis; chorismate from D-erythrose 4-phosphate and phosphoenolpyruvate: step 3/7. It participates in metabolic intermediate biosynthesis; chorismate biosynthesis; chorismate from D-erythrose 4-phosphate and phosphoenolpyruvate: step 4/7. The protein operates within metabolic intermediate biosynthesis; chorismate biosynthesis; chorismate from D-erythrose 4-phosphate and phosphoenolpyruvate: step 5/7. It functions in the pathway metabolic intermediate biosynthesis; chorismate biosynthesis; chorismate from D-erythrose 4-phosphate and phosphoenolpyruvate: step 6/7. The AROM polypeptide catalyzes 5 consecutive enzymatic reactions in prechorismate polyaromatic amino acid biosynthesis. In Sordaria macrospora (strain ATCC MYA-333 / DSM 997 / K(L3346) / K-hell), this protein is Pentafunctional AROM polypeptide.